The primary structure comprises 308 residues: Glutaminase (308 aa).

S65, N116, E161, N168, Y192, Y244, and V262 together coordinate substrate.

It belongs to the glutaminase family. In terms of assembly, homotetramer.

The enzyme catalyses L-glutamine + H2O = L-glutamate + NH4(+). This is Glutaminase from Geobacillus kaustophilus (strain HTA426).